The following is a 333-amino-acid chain: Ferrochelatase (333 aa).

Fe cation contacts are provided by H202 and E284.

This sequence belongs to the ferrochelatase family.

It is found in the cytoplasm. The catalysed reaction is heme b + 2 H(+) = protoporphyrin IX + Fe(2+). It functions in the pathway porphyrin-containing compound metabolism; protoheme biosynthesis; protoheme from protoporphyrin-IX: step 1/1. In terms of biological role, catalyzes the ferrous insertion into protoporphyrin IX. The chain is Ferrochelatase from Francisella tularensis subsp. tularensis (strain FSC 198).